Reading from the N-terminus, the 216-residue chain is Uracil phosphoribosyltransferase (216 aa).

30 to 34 (KNLVR) provides a ligand contact to GTP. Residues R80, R105, and 140 to 148 (DPMIATAST) each bind 5-phospho-alpha-D-ribose 1-diphosphate. Uracil-binding positions include I203 and 208–210 (GDA). A 5-phospho-alpha-D-ribose 1-diphosphate-binding site is contributed by D209.

The protein belongs to the UPRTase family. Mg(2+) is required as a cofactor.

The catalysed reaction is UMP + diphosphate = 5-phospho-alpha-D-ribose 1-diphosphate + uracil. It functions in the pathway pyrimidine metabolism; UMP biosynthesis via salvage pathway; UMP from uracil: step 1/1. Allosterically activated by GTP. In terms of biological role, catalyzes the conversion of uracil and 5-phospho-alpha-D-ribose 1-diphosphate (PRPP) to UMP and diphosphate. This chain is Uracil phosphoribosyltransferase, found in Saccharolobus islandicus (strain M.16.4 / Kamchatka #3) (Sulfolobus islandicus).